The following is a 492-amino-acid chain: Trypanothione reductase (492 aa).

36–52 is an FAD binding site; it reads DVQMVHGPPFFSALGGT. A disulfide bond links Cys53 and Cys58. His461 functions as the Proton acceptor in the catalytic mechanism.

Belongs to the class-I pyridine nucleotide-disulfide oxidoreductase family. Homodimer. FAD serves as cofactor.

The protein resides in the cytoplasm. The catalysed reaction is trypanothione + NADP(+) = trypanothione disulfide + NADPH + H(+). Trypanothione is the parasite analog of glutathione; this enzyme is the equivalent of glutathione reductase. The polypeptide is Trypanothione reductase (TPR) (Trypanosoma cruzi).